The chain runs to 156 residues: MECSINNQQADYPVGEELLSTLNRVLQAAAAAEGVAGEAEVSLTLVDDAAIKELNRTYRGVDAPTDVLSFALEEKGPDEPAYADPGGDKLLGDIIISVPTAVRQAGEYGHSLARELAFLAVHGFLHLLGYDHDTAAGAADMEARQEAILAGVGLRR.

3 residues coordinate Zn(2+): H122, H126, and H132.

Belongs to the endoribonuclease YbeY family. Zn(2+) is required as a cofactor.

It localises to the cytoplasm. Its function is as follows. Single strand-specific metallo-endoribonuclease involved in late-stage 70S ribosome quality control and in maturation of the 3' terminus of the 16S rRNA. The chain is Endoribonuclease YbeY from Moorella thermoacetica (strain ATCC 39073 / JCM 9320).